We begin with the raw amino-acid sequence, 283 residues long: Undecaprenyl-diphosphatase (283 aa).

A run of 8 helical transmembrane segments spans residues 4 to 24, 45 to 65, 91 to 111, 118 to 138, 153 to 173, 194 to 214, 228 to 248, and 258 to 278; these read LLILKAVIMGIVEGITEFLPI, ADLFIVVIQLGAILAVIYEYW, QLGLSLIVATIPVMLVGFTLA, LFNPYTVAIMLILGGLLIFYV, VSLKTALLIGLMQCLALIPGT, AEFSFFLGIPVIIGAGLLDLL, ILGVGVLVSFVVGLLCIRWLV, and IFAWLRIITGIIVLLVAWIFG.

It belongs to the UppP family.

The protein localises to the cell inner membrane. It carries out the reaction di-trans,octa-cis-undecaprenyl diphosphate + H2O = di-trans,octa-cis-undecaprenyl phosphate + phosphate + H(+). Its function is as follows. Catalyzes the dephosphorylation of undecaprenyl diphosphate (UPP). Confers resistance to bacitracin. The chain is Undecaprenyl-diphosphatase from Psychrobacter sp. (strain PRwf-1).